Consider the following 269-residue polypeptide: Adenosylcobinamide-GDP ribazoletransferase (269 aa).

5 consecutive transmembrane segments (helical) span residues 8-28 (QFNL…PTAI), 41-61 (YFPL…CFML), 70-90 (VCLL…DGLA), 114-136 (IGTY…LSSL), and 196-216 (VPAV…SACV).

It belongs to the CobS family. Mg(2+) is required as a cofactor.

It is found in the cell inner membrane. The enzyme catalyses alpha-ribazole + adenosylcob(III)inamide-GDP = adenosylcob(III)alamin + GMP + H(+). It catalyses the reaction alpha-ribazole 5'-phosphate + adenosylcob(III)inamide-GDP = adenosylcob(III)alamin 5'-phosphate + GMP + H(+). It functions in the pathway cofactor biosynthesis; adenosylcobalamin biosynthesis; adenosylcobalamin from cob(II)yrinate a,c-diamide: step 7/7. In terms of biological role, joins adenosylcobinamide-GDP and alpha-ribazole to generate adenosylcobalamin (Ado-cobalamin). Also synthesizes adenosylcobalamin 5'-phosphate from adenosylcobinamide-GDP and alpha-ribazole 5'-phosphate. The protein is Adenosylcobinamide-GDP ribazoletransferase of Pseudoalteromonas atlantica (strain T6c / ATCC BAA-1087).